The following is a 691-amino-acid chain: F-box/LRR-repeat protein 5 (691 aa).

Positions 1-159 are hemerythrin-like; that stretch reads MAPFPEEVDV…IKKKVIAQHC (159 aa). 7 residues coordinate Fe(3+): H15, H57, E58, E61, H80, H126, and E130. An F-box domain is found at 202–248; the sequence is STGITHLPPEVMVSIFSYLNPQELCRCSQVSTKWSQLAKTGSLWKHL. LRR repeat units lie at residues 340 to 364, 365 to 392, 393 to 418, 479 to 508, 576 to 607, 608 to 635, and 636 to 661; these read SSAV…LDLT, QTDI…DLSG, CEKI…ESGL, VWML…CVME, TRLL…SLSG, CYQI…NLSG, and CLTV…YFYY. Residues C662, C676, C686, and C687 each contribute to the [2Fe-2S] cluster site.

Part of a SCF (SKP1-cullin-F-box) protein ligase complex. Interacts with ACO1/IRP1, IREB2/IRP2; the interaction depends on the [2Fe-2S] cluster. Interacts with DCTN1/p150-glued. Requires [2Fe-2S] cluster as cofactor. Post-translationally, polybiquitinated upon iron and oxygen depletion, leading to its degradation by the proteasome. Ubiquitination is regulated by the hemerythrin-like region that acts as an oxygen and iron sensor. Undergoes constitutive ubiquitin-dependent degradation at the steady state by HERC2.

The protein resides in the cytoplasm. It is found in the perinuclear region. It localises to the nucleus. It functions in the pathway protein modification; protein ubiquitination. Its activity is regulated as follows. An iron-sulfur cluster promotes IRP2 polyubiquitination and degradation in response to both iron and oxygen concentrations. Component of some SCF (SKP1-cullin-F-box) protein ligase complex that plays a central role in iron homeostasis by promoting the ubiquitination and subsequent degradation of IREB2/IRP2. The C-terminal domain of FBXL5 contains a redox-sensitive [2Fe-2S] cluster that, upon oxidation, promotes binding to IRP2 to effect its oxygen-dependent degradation. Under iron deficiency conditions, the N-terminal hemerythrin-like (Hr) region, which contains a diiron metal center, cannot bind iron and undergoes conformational changes that destabilize the FBXL5 protein and cause its ubiquitination and degradation. When intracellular iron levels start rising, the Hr region is stabilized. Additional increases in iron levels facilitate the assembly and incorporation of a redox active [2Fe-2S] cluster in the C-terminal domain. Only when oxygen level is high enough to maintain the cluster in its oxidized state can FBXL5 recruit IRP2 as a substrate for polyubiquination and degradation. Promotes ubiquitination and subsequent degradation of the dynactin complex component DCTN1. Within the nucleus, promotes the ubiquitination of SNAI1; preventing its interaction with DNA and promoting its degradation. Negatively regulates DNA damage response by mediating the ubiquitin-proteasome degradation of the DNA repair protein NABP2. This Bos taurus (Bovine) protein is F-box/LRR-repeat protein 5 (FBXL5).